A 351-amino-acid chain; its full sequence is Peptide chain release factor 1 (351 aa).

Gln229 carries the N5-methylglutamine modification.

The protein belongs to the prokaryotic/mitochondrial release factor family. Post-translationally, methylated by PrmC. Methylation increases the termination efficiency of RF1.

It is found in the cytoplasm. Its function is as follows. Peptide chain release factor 1 directs the termination of translation in response to the peptide chain termination codons UAG and UAA. This chain is Peptide chain release factor 1, found in Dinoroseobacter shibae (strain DSM 16493 / NCIMB 14021 / DFL 12).